The chain runs to 541 residues: Arginine--tRNA ligase (541 aa).

The short motif at 123–133 is the 'HIGH' region element; that stretch reads ANPTGFLHIGH.

The protein belongs to the class-I aminoacyl-tRNA synthetase family. In terms of assembly, monomer.

The protein resides in the cytoplasm. It catalyses the reaction tRNA(Arg) + L-arginine + ATP = L-arginyl-tRNA(Arg) + AMP + diphosphate. This is Arginine--tRNA ligase from Metamycoplasma arthritidis (strain 158L3-1) (Mycoplasma arthritidis).